A 953-amino-acid polypeptide reads, in one-letter code: Zinc finger protein 618 (953 aa).

Position 1 is an N-acetylmethionine (Met-1). The disordered stretch occupies residues 1 to 56 (MSQPDGAAAPQVDGASAPGRKSAVNRERLKRSQKSSKVEGPEPVPAEASLSAEQGT). Glycyl lysine isopeptide (Lys-Gly) (interchain with G-Cter in SUMO2) cross-links involve residues Lys-63 and Lys-81. 2 consecutive C2H2-type zinc fingers follow at residues 146-168 (YECG…VRAH) and 187-209 (YTCD…RDLH). Lys-238 is covalently cross-linked (Glycyl lysine isopeptide (Lys-Gly) (interchain with G-Cter in SUMO2)). A C2H2-type 3 zinc finger spans residues 255–277 (YTCEFCGKQYKYYTPYQEHVALH). Disordered regions lie at residues 283–305 (APGW…EVTP) and 337–390 (TPPA…SSEP). Over residues 339–354 (PATQTQTFRAPNSGSP) the composition is skewed to polar residues. Residues 365-379 (FSRRVESKAQNHFEE) are compositionally biased toward basic and acidic residues. The C2H2-type 4 zinc finger occupies 391–413 (YTCGACGIQFQFYSNLLEHMQSH). Positions 419–428 (NNITSNQSRS) are enriched in polar residues. Residues 419–461 (NNITSNQSRSPPAAVEEKWKPQAQRNSANNTTTSGLTPNSVIP) are disordered. Lys-436 is covalently cross-linked (Glycyl lysine isopeptide (Lys-Gly) (interchain with G-Cter in SUMO2)). Residues 441–458 (AQRNSANNTTTSGLTPNS) show a composition bias toward polar residues.

The protein belongs to the krueppel C2H2-type zinc-finger protein family. As to quaternary structure, interacts with UHRF2.

It localises to the nucleus. It is found in the chromosome. Functionally, regulates UHRF2 function as a specific 5-hydroxymethylcytosine (5hmC) reader by regulating its chromatin localization. This chain is Zinc finger protein 618 (Znf618), found in Mus musculus (Mouse).